The chain runs to 566 residues: Urease subunit alpha (566 aa).

In terms of domain architecture, Urease spans Gly128–Phe566. Residues His133, His135, and Lys216 each contribute to the Ni(2+) site. N6-carboxylysine is present on Lys216. Residue His218 coordinates substrate. The Ni(2+) site is built by His245 and His271. His319 (proton donor) is an active-site residue. Asp359 lines the Ni(2+) pocket.

This sequence belongs to the metallo-dependent hydrolases superfamily. Urease alpha subunit family. In terms of assembly, may form a heterohexamer of 3 UreC (alpha) and 3 UreAB (gamma/beta) subunits. May also form a heterotrimer of UreA (gamma), UreB (beta) and UreC (alpha) subunits. Three heterotrimers associate to form the active enzyme. The cofactor is Ni cation. Carboxylation allows a single lysine to coordinate two nickel ions.

It localises to the cytoplasm. The catalysed reaction is urea + 2 H2O + H(+) = hydrogencarbonate + 2 NH4(+). Its pathway is nitrogen metabolism; urea degradation; CO(2) and NH(3) from urea (urease route): step 1/1. The protein is Urease subunit alpha of Pseudomonas syringae pv. tomato (strain ATCC BAA-871 / DC3000).